A 475-amino-acid chain; its full sequence is MSSLLKPDFNVSKYRLIAQKREANAVEIEAALEVVREFIIKKKLILYGGIAIDYALHLKGSSIYPEGERPDFDMFSPNHVEDAYELADILYEKGFKQVGTVRAIHVQTMRVRTDFVWVADLSYMPPNIFDTIPTLTYKNLKIIHPDYQRAGLHLAFCFPFDNPPREDVFSRFKKDLQRYNLIEKYYPIPVVPVKSTYESKTFSIPFKQVAIHGFAAYALLYQTLNELRITCKVPEWKTEFPQPSYSYHKNDKNITLTIDMPRAYPALVLATYNPEGVIKEMGLHLTEICEPYMDYSPPIFKTNDIHFFSTMFKELAISIIQDNLIVVSPQYLLLYFLYGAFATPADKSLFLFYYNATLWILEKADSLLNIIQKQTSPEEFTRFANTSPFVLTTRVLSCSQERCTFSPAYRISLANDVQQSQLPLPKTHFLSNSLPDISTLPYNYYPGKGKEKPTNFSYEKNLLFNIGGKCTPSAM.

It belongs to the poxviridae poly(A) polymerase catalytic subunit family. Highly divergent.

Its subcellular location is the virion. It carries out the reaction RNA(n) + ATP = RNA(n)-3'-adenine ribonucleotide + diphosphate. In terms of biological role, polymerase that creates the 3'-poly(A) tail of mRNAs. The polypeptide is Putative poly(A) polymerase catalytic subunit (Ornithodoros (relapsing fever ticks)).